We begin with the raw amino-acid sequence, 435 residues long: Envelope glycoprotein M (435 aa).

Residues Met-1–Arg-36 lie on the Intravirion side of the membrane. Residues Ile-37 to Ile-57 traverse the membrane as a helical segment. The Virion surface portion of the chain corresponds to Ala-58 to Thr-111. A helical membrane pass occupies residues Tyr-112 to Ile-132. Residues His-133–Thr-155 lie on the Intravirion side of the membrane. A helical transmembrane segment spans residues Thr-156–Tyr-176. The Virion surface portion of the chain corresponds to Lys-177–Gln-178. A helical transmembrane segment spans residues Ile-179 to Tyr-199. The Intravirion portion of the chain corresponds to Phe-200–Ala-233. Residues Val-234–Leu-254 form a helical membrane-spanning segment. At Glu-255 to Gly-265 the chain is on the virion surface side. Residues Leu-266–Ser-288 traverse the membrane as a helical segment. Residues Glu-289–His-294 are Intravirion-facing. A helical membrane pass occupies residues Tyr-295–Ala-317. Residues His-318 to Arg-334 lie on the Virion surface side of the membrane. A helical membrane pass occupies residues Leu-335–Leu-355. At Leu-356 to Glu-435 the chain is on the intravirion side.

Belongs to the herpesviridae glycoprotein M family. Interacts (via N-terminus) with gN (via N-terminus). The gM-gN heterodimer forms the gCII complex.

It localises to the virion membrane. The protein localises to the host Golgi apparatus. It is found in the host trans-Golgi network. Its subcellular location is the host endosome membrane. The protein resides in the host nucleus inner membrane. Envelope glycoprotein important for virion assembly and egress. Plays a role in the correct incorporation of gH-gL into virion membrane. Directs the glycoprotein N (gN) to the host trans-Golgi network. This Homo sapiens (Human) protein is Envelope glycoprotein M.